The chain runs to 523 residues: MSISLNTCILILKEHHLLKSSAVQDTVATKMDYVSYDSRDIQTNTLFFCKGAGFRPTYLSMAKSNGANCYVAEQPYPEGKGMHALIVRDVSKAMALLSAAFFRFPQDDLYVVAFTGTKGKTTSAYFLKGMLDQANGGRTALISSVNDVVGPKPEDSFKSSLTTPESLDLFRDMRTAVDNGMTHLVMEVSSQAYKKNRVFGLTYDLGFFLNISPDHIGPNEHPNFADYLHCKLQLMVNSRKCIINAETANFNEVYAAATTTTNPDSIYLFAREDFENPDLDVPIDFRFASQELDMKETRFKLFCATDKAKKLPINGDYTLKMLGDFNESNGTAAIIGAGLAGLNHDQCAKGIRNVTIPGRMQTERTKEHGMVVVDYAHNKASMMALMRFMQNEFNDPKIIVVVGAPGDKGVSRRPGFSESLSAYADKAFLTTDDPGFEDPKSIAEEIDAGIDHSKCDVTIELDRKKAIHDAIASAGPDDVVLICGKGADAFQKIRGVDTPYPSDIVVAQQVINELEGQDEHFRK.

Position 38 (serine 38) interacts with UDP-N-acetyl-alpha-D-muramoyl-L-alanyl-D-glutamate. Residue 116-122 (GTKGKTT) coordinates ATP. UDP-N-acetyl-alpha-D-muramoyl-L-alanyl-D-glutamate is bound by residues 162–163 (TT), serine 189, and arginine 197. Residue lysine 231 is modified to N6-carboxylysine.

The protein belongs to the MurCDEF family. MurE subfamily. Post-translationally, carboxylation is probably crucial for Mg(2+) binding and, consequently, for the gamma-phosphate positioning of ATP.

The protein resides in the cytoplasm. Its pathway is cell wall biogenesis; peptidoglycan biosynthesis. Catalyzes the addition of an amino acid to the nucleotide precursor UDP-N-acetylmuramoyl-L-alanyl-D-glutamate (UMAG) in the biosynthesis of bacterial cell-wall peptidoglycan. In Lactobacillus acidophilus (strain ATCC 700396 / NCK56 / N2 / NCFM), this protein is UDP-N-acetylmuramyl-tripeptide synthetase.